The following is an 858-amino-acid chain: Neurofilament medium polypeptide (858 aa).

Residue S2 is modified to N-acetylserine. The tract at residues 2–99 is head; the sequence is SYTMEPLGNP…KLSRSNEKEQ (98 aa). The tract at residues 22–57 is disordered; that stretch reads ATYSRASASPSSGFRSQSWSRGSGSTVSSSYKRTNL. Residues 30 to 54 show a composition bias toward low complexity; the sequence is SPSSGFRSQSWSRGSGSTVSSSYKR. O-linked (GlcNAc) threonine glycosylation is present at T47. The 312-residue stretch at 96–407 folds into the IF rod domain; that stretch reads EKEQLQGLND…KLLEGEETRF (312 aa). The tract at residues 100 to 131 is coil 1A; it reads LQGLNDRFAGYIEKVHYLEQQNKEIEAELAAL. Positions 132 to 144 are linker 1; it reads RQKHAGRAQLGDA. The segment at 145–243 is coil 1B; sequence YEQELRELRG…EEEVAELLAQ (99 aa). Residues 244–260 form a linker 12 region; sequence LQASHATVERKDYLKTD. A coil 2A region spans residues 261 to 282; sequence LTTALKEIRAQLECQSDHNMHQ. Residues 283 to 286 form a linker 2 region; it reads AEEW. A coil 2B region spans residues 287 to 407; it reads FKCRYAKLTE…KLLEGEETRF (121 aa). The tail stretch occupies residues 408 to 858; the sequence is SAFSGSITGP…SHAVVKEIKE (451 aa). The O-linked (GlcNAc) threonine glycan is linked to T427. Residues 478 to 788 are disordered; it reads AAKAQEEEQE…VVTNGLDVSP (311 aa). 2 stretches are compositionally biased toward acidic residues: residues 484 to 500 and 509 to 524; these read EEQE…EEEA and AAEE…EEEE. Basic and acidic residues predominate over residues 525 to 541; it reads AAKSDAAEEGGSKKEEI. Positions 542 to 555 are enriched in acidic residues; that stretch reads EEKEEGEEAEEEEA. The segment covering 556–572 has biased composition (basic and acidic residues); it reads EAKGKAEEAGAKVEKVK. Pro residues predominate over residues 576 to 586; the sequence is AKSPPKSPPKS. Over residues 590–601 the composition is skewed to low complexity; the sequence is EQAKAVQKAAAE. Residues 602–623 are compositionally biased toward basic and acidic residues; sequence VGKDQKAEKAAEKAAKEEKAAS. Residues 624-637 show a composition bias toward low complexity; sequence PEKPATPKVTSPEK. Basic and acidic residues-rich tracts occupy residues 651 to 664 and 675 to 727; these read ITPE…KPTT and ASPE…KAVV. Positions 728-743 are enriched in low complexity; the sequence is EESITVTKVTKVTAEV. A compositionally biased stretch (basic and acidic residues) spans 744–771; it reads EVSKEARKEDIAVNGEVEEKKDEAKEKE.

The protein belongs to the intermediate filament family. There are a number of repeats of the tripeptide K-S-P, NFM is phosphorylated on a number of the serines in this motif. It is thought that phosphorylation of NFM results in the formation of interfilament cross bridges that are important in the maintenance of axonal caliber. In terms of processing, phosphorylation seems to play a major role in the functioning of the larger neurofilament polypeptides (NF-M and NF-H), the levels of phosphorylation being altered developmentally and coincident with a change in the neurofilament function.

It localises to the cytoplasm. Its subcellular location is the cytoskeleton. The protein resides in the cell projection. The protein localises to the axon. In terms of biological role, neurofilaments usually contain three intermediate filament proteins: NEFL, NEFM, and NEFH which are involved in the maintenance of neuronal caliber. May additionally cooperate with other neuronal intermediate filament proteins to form neuronal filamentous networks. The sequence is that of Neurofilament medium polypeptide (NEFM) from Gallus gallus (Chicken).